We begin with the raw amino-acid sequence, 142 residues long: MPPKKKVTGLIKLQIQAGQANPAPPVGPALGQHGVNIMEFCKAYNAATESQRGNVIPVEITVYEDRSFTFALKTPPAAKLLLKAAGVPKGSGEPHKTKVAKVTWDQVREIAETKKEDLNANDIDQAAKIIAGTARSMGITVE.

Belongs to the universal ribosomal protein uL11 family. Part of the ribosomal stalk of the 50S ribosomal subunit. Interacts with L10 and the large rRNA to form the base of the stalk. L10 forms an elongated spine to which L12 dimers bind in a sequential fashion forming a multimeric L10(L12)X complex. Post-translationally, one or more lysine residues are methylated.

Its function is as follows. Forms part of the ribosomal stalk which helps the ribosome interact with GTP-bound translation factors. This Mycolicibacterium gilvum (strain PYR-GCK) (Mycobacterium gilvum (strain PYR-GCK)) protein is Large ribosomal subunit protein uL11.